Reading from the N-terminus, the 347-residue chain is Phosphate acyltransferase (347 aa).

Belongs to the PlsX family. As to quaternary structure, homodimer. Probably interacts with PlsY.

The protein localises to the cytoplasm. The enzyme catalyses a fatty acyl-[ACP] + phosphate = an acyl phosphate + holo-[ACP]. It functions in the pathway lipid metabolism; phospholipid metabolism. Its function is as follows. Catalyzes the reversible formation of acyl-phosphate (acyl-PO(4)) from acyl-[acyl-carrier-protein] (acyl-ACP). This enzyme utilizes acyl-ACP as fatty acyl donor, but not acyl-CoA. The chain is Phosphate acyltransferase from Pediococcus pentosaceus (strain ATCC 25745 / CCUG 21536 / LMG 10740 / 183-1w).